Here is a 559-residue protein sequence, read N- to C-terminus: O-fucosyltransferase 37 (559 aa).

A helical; Signal-anchor for type II membrane protein transmembrane segment spans residues 53 to 73 (FFLLLISLSLVFSGISFLTFS). Asn126 carries N-linked (GlcNAc...) asparagine glycosylation. 331-333 (HLR) lines the substrate pocket. Asn372, Asn403, Asn447, and Asn504 each carry an N-linked (GlcNAc...) asparagine glycan.

It belongs to the glycosyltransferase GT106 family.

It localises to the membrane. The protein operates within glycan metabolism. This chain is O-fucosyltransferase 37, found in Arabidopsis thaliana (Mouse-ear cress).